We begin with the raw amino-acid sequence, 334 residues long: MKKNQFLKESDVTAESVFFMKRRQVLKALGISAAALSLPHAAHADLLSWFKGNDRPLAPAGKPLEFSKPAAWQNNLPLTPVDKVSGYNNFYEFGLDKADPAANAGSLKTDPWTLKISGEVAKPLTLDHDDLTRRFPLEERIYRMRCVEAWSMVVPWIGFPLHKLLALAEPTSNAKYVAFETIYAPEQMPGQQDRFIGGGLKYPYVEGLRLDEAMHPLTLMTVGVYGKALPPQNGAPVRLIVPWKYGFKGIKSIVSIKLTRERPPTTWNLAAPDEYGFYANVNPHVDHPRWSQATERFIGSGGILDVQRQPTLLFNGYADQVASLYRGLDLRENF.

The segment at residues 1–44 (MKKNQFLKESDVTAESVFFMKRRQVLKALGISAAALSLPHAAHA) is a signal peptide (tat-type signal). Residues Asn-88, 91-92 (YE), Cys-146, Thr-181, Asn-233, Arg-238, and 249-251 (GIK) each bind Mo-molybdopterin.

This sequence belongs to the MsrP family. In terms of assembly, heterodimer of a catalytic subunit (MsrP) and a heme-binding subunit (MsrQ). Mo-molybdopterin is required as a cofactor. Predicted to be exported by the Tat system. The position of the signal peptide cleavage has not been experimentally proven.

The protein localises to the periplasm. It carries out the reaction L-methionyl-[protein] + a quinone + H2O = L-methionyl-(S)-S-oxide-[protein] + a quinol. It catalyses the reaction L-methionyl-[protein] + a quinone + H2O = L-methionyl-(R)-S-oxide-[protein] + a quinol. Its function is as follows. Part of the MsrPQ system that repairs oxidized periplasmic proteins containing methionine sulfoxide residues (Met-O), using respiratory chain electrons. Thus protects these proteins from oxidative-stress damage caused by reactive species of oxygen and chlorine generated by the host defense mechanisms. MsrPQ is essential for the maintenance of envelope integrity under bleach stress, rescuing a wide series of structurally unrelated periplasmic proteins from methionine oxidation, including the primary periplasmic chaperone SurA and the lipoprotein Pal. The catalytic subunit MsrP is non-stereospecific, being able to reduce both (R-) and (S-) diastereoisomers of methionine sulfoxide. In Escherichia coli O9:H4 (strain HS), this protein is Protein-methionine-sulfoxide reductase catalytic subunit MsrP.